The primary structure comprises 807 residues: Putative AC transposase (807 aa).

2 disordered regions span residues 42–140 and 785–807; these read GLKR…KKCT and MDED…GSSP. The segment covering 84-98 has biased composition (polar residues); it reads QSVSSSNANGTATDP. A run of 10 repeats spans residues 109–110, 111–112, 113–114, 115–116, 117–118, 119–120, 121–122, 123–124, 125–126, and 127–128. The interval 109–128 is 10 X 2 AA tandem repeats of P-[QE]; that stretch reads PQPQPQPQPEPQPQPQPEPE. Residues 110-125 show a composition bias toward pro residues; the sequence is QPQPQPQPEPQPQPQP.

This is Putative AC transposase from Zea mays (Maize).